Reading from the N-terminus, the 599-residue chain is Elongation factor 4 (599 aa).

Residues 5 to 187 (NHIRNFSIIA…QIVQLVPPPE (183 aa)) enclose the tr-type G domain. Residues 17–22 (DHGKST) and 134–137 (NKMD) each bind GTP.

It belongs to the TRAFAC class translation factor GTPase superfamily. Classic translation factor GTPase family. LepA subfamily.

Its subcellular location is the cell inner membrane. It carries out the reaction GTP + H2O = GDP + phosphate + H(+). Its function is as follows. Required for accurate and efficient protein synthesis under certain stress conditions. May act as a fidelity factor of the translation reaction, by catalyzing a one-codon backward translocation of tRNAs on improperly translocated ribosomes. Back-translocation proceeds from a post-translocation (POST) complex to a pre-translocation (PRE) complex, thus giving elongation factor G a second chance to translocate the tRNAs correctly. Binds to ribosomes in a GTP-dependent manner. The polypeptide is Elongation factor 4 (Hahella chejuensis (strain KCTC 2396)).